The following is a 396-amino-acid chain: D-alanine--D-alanine ligase (396 aa).

In terms of domain architecture, ATP-grasp spans 141-347 (KMLWQAAGLP…PQDLMAQLLS (207 aa)). An ATP-binding site is contributed by 174-229 (ETRLGYPLFVKPAQAGSSVGASAVQTRAPLIPAIEAAFQWDEVVLVERYVRAREIE). Mg(2+) is bound by residues aspartate 301, glutamate 314, and asparagine 316. The tract at residues 374–396 (AAHDPDAQGDDWDQRDSNPLPTA) is disordered.

It belongs to the D-alanine--D-alanine ligase family. It depends on Mg(2+) as a cofactor. Mn(2+) serves as cofactor.

Its subcellular location is the cytoplasm. The catalysed reaction is 2 D-alanine + ATP = D-alanyl-D-alanine + ADP + phosphate + H(+). The protein operates within cell wall biogenesis; peptidoglycan biosynthesis. Functionally, cell wall formation. The chain is D-alanine--D-alanine ligase from Treponema pallidum (strain Nichols).